A 698-amino-acid polypeptide reads, in one-letter code: Topoisomerase subunit TopoN (698 aa).

An Isoglutamyl lysine isopeptide (Lys-Gln) (interchain with Q-Cter in protein Pup) cross-link involves residue K429. The segment at 443–473 (GAKARARAASKAKGLGTNLSLPPKLLPSRES) is disordered. Residues 479–593 (AELFLCEGDS…AGMVYVTMPP (115 aa)) enclose the Toprim domain.

Belongs to the type II topoisomerase family. As to quaternary structure, a complex of TopoN and TopoM, possibly a heterotetramer. The cofactor is Mg(2+).

It carries out the reaction ATP-dependent breakage, passage and rejoining of double-stranded DNA.. With respect to regulation, inhibited by quinolone antibiotic ciprofloxacin and coumarin antibiotic novobiocin, but at much higher concentrations than is usual for DNA gyrase/topoisomerase. Its function is as follows. Catalyzes the relaxation of negatively supercoiled DNA in the presence of ATP or dATP but not other nucleotides. Individual subunits have no activity. Not able to negatively supercoil DNA, it can however introduce positive supercoils in DNA. Relaxes positive supercoils in an ATP-dependent manner. Catenates and decatenates DNA. Generates dsDNA breaks in the presence of the quinolone antibiotic ciprofloxacin, showing it is a topoisomerase. The chain is Topoisomerase subunit TopoN from Mycolicibacterium smegmatis (strain ATCC 700084 / mc(2)155) (Mycobacterium smegmatis).